The chain runs to 150 residues: NmrA-like family domain-containing protein 1 (150 aa).

Residues 7–12 (GATGAQ), 33–37 (RNPEQ), and Lys71 contribute to the NADP(+) site.

This sequence belongs to the NmrA-type oxidoreductase family. As to quaternary structure, homodimer. Interacts with ASS1. Interaction is enhanced by low NADPH/NADP(+) ratios, which results in inhibition of ASS1 activity.

It is found in the cytoplasm. It localises to the perinuclear region. Its subcellular location is the nucleus. Functionally, redox sensor protein. Undergoes restructuring and subcellular redistribution in response to changes in intracellular NADPH/NADP(+) levels. At low NADPH concentrations the protein is found mainly as a monomer, and binds argininosuccinate synthase (ASS1), the enzyme involved in nitric oxide synthesis. Association with ASS1 impairs its activity and reduces the production of nitric oxide, which subsecuently prevents apoptosis. Under normal NADPH concentrations, the protein is found as a dimer and hides the binding site for ASS1. The homodimer binds one molecule of NADPH. Has higher affinity for NADPH than for NADP(+). Binding to NADPH is necessary to form a stable dimer. The chain is NmrA-like family domain-containing protein 1 from Rattus norvegicus (Rat).